The following is a 254-amino-acid chain: tRNA (guanine-N(1)-)-methyltransferase (254 aa).

S-adenosyl-L-methionine-binding positions include Gly115 and 135–140 (VGDFVL).

This sequence belongs to the RNA methyltransferase TrmD family. In terms of assembly, homodimer.

It localises to the cytoplasm. It carries out the reaction guanosine(37) in tRNA + S-adenosyl-L-methionine = N(1)-methylguanosine(37) in tRNA + S-adenosyl-L-homocysteine + H(+). Its function is as follows. Specifically methylates guanosine-37 in various tRNAs. The sequence is that of tRNA (guanine-N(1)-)-methyltransferase from Francisella tularensis subsp. tularensis (strain FSC 198).